The chain runs to 323 residues: tRNA dimethylallyltransferase (323 aa).

Residue 12 to 19 (GPTASGKT) participates in ATP binding. Residue 14-19 (TASGKT) participates in substrate binding. Interaction with substrate tRNA stretches follow at residues 37-40 (DSAL) and 161-165 (QRLVR).

The protein belongs to the IPP transferase family. Monomer. Requires Mg(2+) as cofactor.

The catalysed reaction is adenosine(37) in tRNA + dimethylallyl diphosphate = N(6)-dimethylallyladenosine(37) in tRNA + diphosphate. Its function is as follows. Catalyzes the transfer of a dimethylallyl group onto the adenine at position 37 in tRNAs that read codons beginning with uridine, leading to the formation of N6-(dimethylallyl)adenosine (i(6)A). The polypeptide is tRNA dimethylallyltransferase (Stutzerimonas stutzeri (strain A1501) (Pseudomonas stutzeri)).